The sequence spans 89 residues: Small ribosomal subunit protein uS15 (89 aa).

Over residues 1–21 (MSVDAETKTKIIKDNARDKND) the composition is skewed to basic and acidic residues. Residues 1-26 (MSVDAETKTKIIKDNARDKNDTGSPE) form a disordered region.

The protein belongs to the universal ribosomal protein uS15 family. As to quaternary structure, part of the 30S ribosomal subunit. Forms a bridge to the 50S subunit in the 70S ribosome, contacting the 23S rRNA.

In terms of biological role, one of the primary rRNA binding proteins, it binds directly to 16S rRNA where it helps nucleate assembly of the platform of the 30S subunit by binding and bridging several RNA helices of the 16S rRNA. Functionally, forms an intersubunit bridge (bridge B4) with the 23S rRNA of the 50S subunit in the ribosome. The protein is Small ribosomal subunit protein uS15 of Erythrobacter litoralis (strain HTCC2594).